A 219-amino-acid polypeptide reads, in one-letter code: Large ribosomal subunit protein bL25 (219 aa).

Residues 176-219 form a disordered region; that stretch reads VTVVPPTDEPSEEEVEAMEGESATEEPEVVGEDKEDDEEENKED. Residues 184–219 show a composition bias toward acidic residues; sequence EPSEEEVEAMEGESATEEPEVVGEDKEDDEEENKED.

This sequence belongs to the bacterial ribosomal protein bL25 family. CTC subfamily. As to quaternary structure, part of the 50S ribosomal subunit; part of the 5S rRNA/L5/L18/L25 subcomplex. Contacts the 5S rRNA. Binds to the 5S rRNA independently of L5 and L18.

Functionally, this is one of the proteins that binds to the 5S RNA in the ribosome where it forms part of the central protuberance. The chain is Large ribosomal subunit protein bL25 from Staphylococcus epidermidis (strain ATCC 35984 / DSM 28319 / BCRC 17069 / CCUG 31568 / BM 3577 / RP62A).